A 509-amino-acid chain; its full sequence is Cardiolipin synthase 1 (509 aa).

3 consecutive transmembrane segments (helical) span residues 4-24, 30-50, and 59-79; these read PIIQ…LLNT, YTFV…VIFI, and LAWF…YSIF. 2 consecutive PLD phosphodiesterase domains span residues 238-265 and 422-449; these read VNYR…GDEY and KDGF…DVRS. Residues His243, Lys245, Asp250, His427, Lys429, and Asp434 contribute to the active site.

It belongs to the phospholipase D family. Cardiolipin synthase subfamily.

It localises to the cell membrane. It carries out the reaction 2 a 1,2-diacyl-sn-glycero-3-phospho-(1'-sn-glycerol) = a cardiolipin + glycerol. Functionally, catalyzes the reversible phosphatidyl group transfer from one phosphatidylglycerol molecule to another to form cardiolipin (CL) (diphosphatidylglycerol) and glycerol. The polypeptide is Cardiolipin synthase 1 (cls1) (Bacillus anthracis).